A 122-amino-acid chain; its full sequence is UPF0102 protein Atu0303 (122 aa).

Belongs to the UPF0102 family.

The protein is UPF0102 protein Atu0303 of Agrobacterium fabrum (strain C58 / ATCC 33970) (Agrobacterium tumefaciens (strain C58)).